A 366-amino-acid polypeptide reads, in one-letter code: D-alanine--D-alanine ligase (366 aa).

The ATP-grasp domain maps to 149 to 358 (KIAFDHAGLP…FSELVDTLIQ (210 aa)). An ATP-binding site is contributed by 185–240 (ETTLEYPCFVKPANLGSSVGIAKVRSRSELETALDNAASYDRRIIVEAGVEAKELE). Asp-311, Glu-325, and Asn-327 together coordinate Mg(2+).

It belongs to the D-alanine--D-alanine ligase family. The cofactor is Mg(2+). Mn(2+) is required as a cofactor.

The protein resides in the cytoplasm. The enzyme catalyses 2 D-alanine + ATP = D-alanyl-D-alanine + ADP + phosphate + H(+). Its pathway is cell wall biogenesis; peptidoglycan biosynthesis. Functionally, cell wall formation. This is D-alanine--D-alanine ligase from Trichodesmium erythraeum (strain IMS101).